A 324-amino-acid chain; its full sequence is Porphobilinogen deaminase 1 (324 aa).

The residue at position 249 (cysteine 249) is an S-(dipyrrolylmethanemethyl)cysteine.

Belongs to the HMBS family. Monomer. Requires dipyrromethane as cofactor.

The catalysed reaction is 4 porphobilinogen + H2O = hydroxymethylbilane + 4 NH4(+). Its pathway is porphyrin-containing compound metabolism; protoporphyrin-IX biosynthesis; coproporphyrinogen-III from 5-aminolevulinate: step 2/4. Functionally, tetrapolymerization of the monopyrrole PBG into the hydroxymethylbilane pre-uroporphyrinogen in several discrete steps. This chain is Porphobilinogen deaminase 1 (hemC1), found in Streptomyces avermitilis (strain ATCC 31267 / DSM 46492 / JCM 5070 / NBRC 14893 / NCIMB 12804 / NRRL 8165 / MA-4680).